We begin with the raw amino-acid sequence, 228 residues long: Ornithine decarboxylase antizyme 1 (228 aa).

The interval 17–55 is disordered; it reads REKEGDKPSATIHASRTMPLLSLHSRGGSSSESSRVSLH. Residues 36 to 55 are compositionally biased toward low complexity; that stretch reads LLSLHSRGGSSSESSRVSLH.

It belongs to the ODC antizyme family. Interacts with ODC1 and thereby sterically blocks ODC homodimerization. Forms a ternary complex with PSMB4 and OAZ1 before PSMB4 is incorporated into the 20S proteasome. Interacts with AZIN2; this interaction disrupts the interaction between the antizyme and ODC1. Interacts with FAM171A1.

Functionally, ornithine decarboxylase (ODC) antizyme protein that negatively regulates ODC activity and intracellular polyamine biosynthesis and uptake in response to increased intracellular polyamine levels. Binds to ODC monomers, inhibiting the assembly of the functional ODC homodimer, and targets the monomers for ubiquitin-independent proteolytic destruction by the 26S proteasome. Triggers ODC degradation by inducing the exposure of a cryptic proteasome-interacting surface of ODC. Stabilizes AZIN2 by interfering with its ubiquitination. Also inhibits cellular uptake of polyamines by inactivating the polyamine uptake transporter. SMAD1/OAZ1/PSMB4 complex mediates the degradation of the CREBBP/EP300 repressor SNIP1. Involved in the translocation of AZIN2 from ER-Golgi intermediate compartment (ERGIC) to the cytosol. The polypeptide is Ornithine decarboxylase antizyme 1 (OAZ1) (Homo sapiens (Human)).